Reading from the N-terminus, the 474-residue chain is Sulfide dehydrogenase subunit alpha (474 aa).

Positions 1–2 (MP) are excised as a propeptide. [4Fe-4S] cluster contacts are provided by Cys42, Cys45, Cys52, and Cys56. Residues Cys101, Cys107, and Cys111 each contribute to the [3Fe-4S] cluster site.

As to quaternary structure, heterodimer of alpha and beta subunits. FAD is required as a cofactor. The cofactor is [3Fe-4S] cluster. It depends on [4Fe-4S] cluster as a cofactor.

Its subcellular location is the cytoplasm. It catalyses the reaction n sulfur + hydrogen sulfide + NADP(+) = (n+1) sulfur + NADPH. The enzyme catalyses 2 reduced [2Fe-2S]-[ferredoxin] + NADP(+) + H(+) = 2 oxidized [2Fe-2S]-[ferredoxin] + NADPH. In terms of biological role, a bifunctional enzyme that catalyzes the reduction of elemental sulfur or polysulfide to hydrogen sulfide with NADPH as electron donor. Also functions as a reduced ferredoxin:NADP oxidoreductase with a very high affinity for reduced ferredoxin. Exhibits a broad specificity for various physiological and non-physiological substrates with varied reduction potentials such as methyl viologen, benzyl viologen, FAD, FMN, methylene blue, 2,6-dichlorophenolindophenol (DCIP), cytochrome C and ferricyanide with highest preference for benzyl viologen. Does not reduce fumarate, succinate, nitrate, nitrite, sulfate, sulfite or protons. Does not possess any hydrogenase activity or NADPH-dependent glutamate synthase activity. This is Sulfide dehydrogenase subunit alpha from Pyrococcus furiosus (strain ATCC 43587 / DSM 3638 / JCM 8422 / Vc1).